A 238-amino-acid chain; its full sequence is Ethylene-responsive transcription factor ERN3 (238 aa).

Positions 24–81 (KFVGVRQRASGKWAAEIKDTSKNIRMWLGTYKTAEEAARAYDEAAFLLRGTNTRTNFS) form a DNA-binding region, AP2/ERF.

It belongs to the AP2/ERF transcription factor family. ERF subfamily. In terms of tissue distribution, expressed in roots, root hairs and leaves.

The protein resides in the nucleus. Functionally, transcription factor involved in symbiotic nodule signaling in response to rhizobial Nod factors (NFs). Binds to the GCC box (NF-responsive box) of ENOD11 promoter. May act as transcriptional repressor of NF-responsive box-containing target gene promoters in root hairs. This chain is Ethylene-responsive transcription factor ERN3, found in Medicago truncatula (Barrel medic).